Consider the following 205-residue polypeptide: High frequency lysogenization protein HflD homolog (205 aa).

This sequence belongs to the HflD family.

Its subcellular location is the cytoplasm. It is found in the cell inner membrane. The chain is High frequency lysogenization protein HflD homolog from Aliivibrio fischeri (strain ATCC 700601 / ES114) (Vibrio fischeri).